Reading from the N-terminus, the 63-residue chain is Sperm protamine P1 (63 aa).

The tract at residues 1–63 (MARYRRHSRS…RYSRRGRRRY (63 aa)) is disordered.

The protein belongs to the protamine P1 family. In terms of tissue distribution, testis.

The protein localises to the nucleus. Its subcellular location is the chromosome. Functionally, protamines substitute for histones in the chromatin of sperm during the haploid phase of spermatogenesis. They compact sperm DNA into a highly condensed, stable and inactive complex. The protein is Sperm protamine P1 (PRM1) of Pseudantechinus macdonnellensis (Fat-tailed marsupial mouse).